The primary structure comprises 194 residues: DNA replication complex GINS protein PSF3 (194 aa).

This sequence belongs to the GINS3/PSF3 family. In terms of assembly, component of the GINS complex which is a heterotetramer of SLD5, PSF1, PSF2 and PSF3.

Its subcellular location is the nucleus. Its function is as follows. Functions as part of the GINS complex which plays an essential role in the initiation of DNA replication by binding to DNA replication origins and facilitating the assembly of the DNA replication machinery. The chain is DNA replication complex GINS protein PSF3 from Saccharomyces cerevisiae (strain ATCC 204508 / S288c) (Baker's yeast).